We begin with the raw amino-acid sequence, 316 residues long: MNPKNAHLATHYLQFDRAQWASLRDSVPLILTEEEIIRLRGINENLSLEEVAAIYLPLSRLLNFYISSNLRQRAILEEFLGTHKQNVPYVIGIAGSVAVGKSTTARLLQALLSRWPEHRRVELVTTDGFLHSNKVLTERGLMKKKGFPESYDMKNLVKFISRIKSGAPKVEAPVYSHLRYDIIPNQKKIVQQPDILILEGLNVLQSGMDYPHDPHHVFVSDFVDFSIYVDASYDLLAHWYINRFLQFRRGAFSDPNSYFHHYAQICEKEAMTVARRLWTEINGLNLNENILPTRERASLIMTKGDNHEVKSVWLKK.

Gly-95 to Ser-102 contributes to the ATP binding site.

Belongs to the prokaryotic pantothenate kinase family.

It is found in the cytoplasm. The catalysed reaction is (R)-pantothenate + ATP = (R)-4'-phosphopantothenate + ADP + H(+). It functions in the pathway cofactor biosynthesis; coenzyme A biosynthesis; CoA from (R)-pantothenate: step 1/5. The polypeptide is Pantothenate kinase (Hamiltonella defensa subsp. Acyrthosiphon pisum (strain 5AT)).